We begin with the raw amino-acid sequence, 78 residues long: D-alanyl carrier protein (78 aa).

The Carrier domain maps to 1-78 (MAFRENVLEI…MIITQLEALK (78 aa)). Ser-36 is modified (O-(pantetheine 4'-phosphoryl)serine).

Belongs to the DltC family. In terms of processing, 4'-phosphopantetheine is transferred from CoA to a specific serine of apo-DCP.

The protein localises to the cytoplasm. Its pathway is cell wall biogenesis; lipoteichoic acid biosynthesis. In terms of biological role, carrier protein involved in the D-alanylation of lipoteichoic acid (LTA). The loading of thioester-linked D-alanine onto DltC is catalyzed by D-alanine--D-alanyl carrier protein ligase DltA. The DltC-carried D-alanyl group is further transferred to cell membrane phosphatidylglycerol (PG) by forming an ester bond, probably catalyzed by DltD. D-alanylation of LTA plays an important role in modulating the properties of the cell wall in Gram-positive bacteria, influencing the net charge of the cell wall. This is D-alanyl carrier protein from Listeria monocytogenes serotype 4b (strain CLIP80459).